The following is a 411-amino-acid chain: Glutamate dehydrogenase 3, mitochondrial (411 aa).

A mitochondrion-targeting transit peptide spans 1–18 (MNALAATSRNFRQAARLL). The active site involves K102.

The protein belongs to the Glu/Leu/Phe/Val dehydrogenases family. In terms of tissue distribution, barely expressed in leaves, spikelets and roots. Glumes and stamens specific accumulation.

It localises to the mitochondrion. The enzyme catalyses L-glutamate + NAD(+) + H2O = 2-oxoglutarate + NH4(+) + NADH + H(+). It carries out the reaction L-glutamate + NADP(+) + H2O = 2-oxoglutarate + NH4(+) + NADPH + H(+). This Oryza sativa subsp. japonica (Rice) protein is Glutamate dehydrogenase 3, mitochondrial (GDH3).